The primary structure comprises 61 residues: Temporin-CDYa (61 aa).

The N-terminal stretch at 1–22 (MFPLKKSLLLLFFLGTINFSFC) is a signal peptide. Residues 23–44 (EEERNAEEERRDDPEERDVAME) constitute a propeptide that is removed on maturation. L59 carries the leucine amide modification.

This sequence belongs to the frog skin active peptide (FSAP) family. Temporin subfamily. In terms of tissue distribution, expressed by the skin glands.

The protein resides in the secreted. Antimicrobial peptide. The sequence is that of Temporin-CDYa from Rana dybowskii (Dybovsky's frog).